The primary structure comprises 356 residues: Magnesium-protoporphyrin IX monomethyl ester [oxidative] cyclase (356 aa).

Belongs to the AcsF family. Fe cation is required as a cofactor.

It carries out the reaction Mg-protoporphyrin IX 13-monomethyl ester + 3 NADPH + 3 O2 + 2 H(+) = 3,8-divinyl protochlorophyllide a + 3 NADP(+) + 5 H2O. The protein operates within porphyrin-containing compound metabolism; chlorophyll biosynthesis (light-independent). In terms of biological role, catalyzes the formation of the isocyclic ring in chlorophyll biosynthesis. Mediates the cyclase reaction, which results in the formation of divinylprotochlorophyllide (Pchlide) characteristic of all chlorophylls from magnesium-protoporphyrin IX 13-monomethyl ester (MgPMME). The protein is Magnesium-protoporphyrin IX monomethyl ester [oxidative] cyclase of Parasynechococcus marenigrum (strain WH8102).